A 141-amino-acid polypeptide reads, in one-letter code: Protein NrdI (141 aa).

The protein belongs to the NrdI family.

In terms of biological role, probably involved in ribonucleotide reductase function. The chain is Protein NrdI from Wigglesworthia glossinidia brevipalpis.